Here is a 78-residue protein sequence, read N- to C-terminus: MPKIYRVVGDTSTGMKFVVEVVGERPYDALEKVYSVLGSRHKLKRTQIRIREVSVVEPSSAKSNEAKMLMVLEKVVRY.

The protein belongs to the eukaryotic ribosomal protein eL20 family. As to quaternary structure, part of the 50S ribosomal subunit. Binds 23S rRNA.

The sequence is that of Large ribosomal subunit protein eL20 from Pyrobaculum calidifontis (strain DSM 21063 / JCM 11548 / VA1).